The chain runs to 694 residues: GRB2-associated-binding protein 1 (694 aa).

Ser2 bears the N-acetylserine mark. In terms of domain architecture, PH spans Glu5 to Gly116. Positions Pro194 to Ser203 are enriched in basic and acidic residues. The disordered stretch occupies residues Pro194–Gly231. Positions Ala204 to His230 are enriched in polar residues. Ser251, Ser253, Ser266, and Ser304 each carry phosphoserine. Residues Ile309 to Ala378 are disordered. The span at Asp358–Cys374 shows a compositional bias: polar residues. Position 387 is a phosphothreonine (Thr387). A phosphoserine mark is found at Ser402 and Ser454. Disordered regions lie at residues Pro492–Ala532 and Asp560–Arg656. Residues Pro594–Gly611 are compositionally biased toward polar residues. The residue at position 627 (Tyr627) is a Phosphotyrosine. A Phosphothreonine modification is found at Thr638. A Phosphoserine modification is found at Ser651. The residue at position 659 (Tyr659) is a Phosphotyrosine. The disordered stretch occupies residues Leu668–Lys694. Positions Ser672 to Thr684 are enriched in basic and acidic residues. Residue Ser683 is modified to Phosphoserine. Residues Glu685 to Lys694 show a composition bias toward polar residues.

The protein belongs to the GAB family. In terms of assembly, identified in a complex containing FRS2, GRB2, GAB1, PIK3R1 and SOS1. Forms a tripartite complex containing GAB1, METTL13 and SPRY2. Within the complex interacts with METTL13. Interacts with GRB2 and with other SH2-containing proteins. Interacts with phosphorylated LAT2. Interacts with PTPRJ. Interacts (phosphorylated) with PTPN11. Interacts with HCK. Post-translationally, phosphorylated in response to FGFR1 activation. Phosphorylated on tyrosine residue(s) by the epidermal growth factor receptor (EGFR) and the insulin receptor (INSR). Tyrosine phosphorylation of GAB1 mediates interaction with several proteins that contain SH2 domains. Phosphorylated on tyrosine residues by HCK upon IL6 signaling.

In terms of biological role, adapter protein that plays a role in intracellular signaling cascades triggered by activated receptor-type kinases. Plays a role in FGFR1 signaling. Probably involved in signaling by the epidermal growth factor receptor (EGFR) and the insulin receptor (INSR). Involved in the MET/HGF-signaling pathway. This chain is GRB2-associated-binding protein 1 (GAB1), found in Bos taurus (Bovine).